Reading from the N-terminus, the 280-residue chain is Threonylcarbamoyl-AMP synthase (280 aa).

A mitochondrion-targeting transit peptide spans 1-56 (MSTARPCAGLRAAVAAGMGLSDGPAGSSRGCRLLRPPAPAPALPGARLLRLPESEA). Serine 61 bears the Phosphoserine mark. The YrdC-like domain occupies 68–258 (TEALRAAVAE…KFGIIRSGCA (191 aa)).

This sequence belongs to the SUA5 family. Interacts with RSC1A1.

Its subcellular location is the cytoplasm. The protein resides in the mitochondrion. The protein localises to the cell membrane. The enzyme catalyses L-threonine + hydrogencarbonate + ATP = L-threonylcarbamoyladenylate + diphosphate + H2O. Cytoplasmic and mitochondrial threonylcarbamoyl-AMP synthase required for the formation of a threonylcarbamoyl group on adenosine at position 37 (t(6)A37) in tRNAs that read codons beginning with adenine. Catalyzes the conversion of L-threonine, HCO(3)(-)/CO(2) and ATP to give threonylcarbamoyl-AMP (TC-AMP) as the acyladenylate intermediate, with the release of diphosphate. Participates in t(6)A37 formation in cytoplasmic and mitochondrial tRNAs. May regulate the activity of some transporters. This Rattus norvegicus (Rat) protein is Threonylcarbamoyl-AMP synthase.